A 496-amino-acid chain; its full sequence is Protein nucleotidyltransferase YdiU (496 aa).

ATP contacts are provided by G98, G100, R101, K116, D128, G129, R179, and R186. The active-site Proton acceptor is D259. Positions 260 and 269 each coordinate Mg(2+). An ATP-binding site is contributed by D269.

Belongs to the SELO family. Mg(2+) is required as a cofactor. The cofactor is Mn(2+).

It carries out the reaction L-seryl-[protein] + ATP = 3-O-(5'-adenylyl)-L-seryl-[protein] + diphosphate. The enzyme catalyses L-threonyl-[protein] + ATP = 3-O-(5'-adenylyl)-L-threonyl-[protein] + diphosphate. The catalysed reaction is L-tyrosyl-[protein] + ATP = O-(5'-adenylyl)-L-tyrosyl-[protein] + diphosphate. It catalyses the reaction L-histidyl-[protein] + UTP = N(tele)-(5'-uridylyl)-L-histidyl-[protein] + diphosphate. It carries out the reaction L-seryl-[protein] + UTP = O-(5'-uridylyl)-L-seryl-[protein] + diphosphate. The enzyme catalyses L-tyrosyl-[protein] + UTP = O-(5'-uridylyl)-L-tyrosyl-[protein] + diphosphate. Its function is as follows. Nucleotidyltransferase involved in the post-translational modification of proteins. It can catalyze the addition of adenosine monophosphate (AMP) or uridine monophosphate (UMP) to a protein, resulting in modifications known as AMPylation and UMPylation. The polypeptide is Protein nucleotidyltransferase YdiU (Albidiferax ferrireducens (strain ATCC BAA-621 / DSM 15236 / T118) (Rhodoferax ferrireducens)).